Here is a 316-residue protein sequence, read N- to C-terminus: Glutamyl-Q tRNA(Asp) synthetase (316 aa).

L-glutamate is bound by residues arginine 13 to serine 17 and aspartate 49. The short motif at proline 16–serine 26 is the 'HIGH' region element. Residues cysteine 105, cysteine 107, tyrosine 119, and cysteine 123 each contribute to the Zn(2+) site. 2 residues coordinate L-glutamate: tyrosine 176 and arginine 194. The 'KMSKS' region signature appears at lysine 232–glutamine 236. Lysine 235 serves as a coordination point for ATP.

The protein belongs to the class-I aminoacyl-tRNA synthetase family. GluQ subfamily. Zn(2+) serves as cofactor.

Functionally, catalyzes the tRNA-independent activation of glutamate in presence of ATP and the subsequent transfer of glutamate onto a tRNA(Asp). Glutamate is transferred on the 2-amino-5-(4,5-dihydroxy-2-cyclopenten-1-yl) moiety of the queuosine in the wobble position of the QUC anticodon. In Photorhabdus laumondii subsp. laumondii (strain DSM 15139 / CIP 105565 / TT01) (Photorhabdus luminescens subsp. laumondii), this protein is Glutamyl-Q tRNA(Asp) synthetase.